We begin with the raw amino-acid sequence, 348 residues long: Cell surface glycoprotein CD200 receptor 1 (348 aa).

The first 24 residues, 1–24 (MLCPWRTANLGLLLILTIFLVAEA), serve as a signal peptide directing secretion. The Extracellular segment spans residues 29 to 265 (QPNNSLMLQT…PVPGAKKSAK (237 aa)). Residues N31, N60, N69, N116, N122, N185, N218, N233, and N247 are each glycosylated (N-linked (GlcNAc...) asparagine). 2 disulfide bridges follow: C83–C155 and C107–C123. One can recognise an Ig-like C2-type domain in the interval 160-251 (PDGNFHRGYH…SHLTGNKSLY (92 aa)). Cystine bridges form between C190–C239 and C209–C227. The chain crosses the membrane as a helical span at residues 266-286 (LYIPYIILTIIILTIVGFIWL). Over 287-348 (LKVNGCRKYK…SEVDTDLHTL (62 aa)) the chain is Cytoplasmic.

Belongs to the CD200R family. CD200 and CD200R1 interact via their respective N-terminal Ig-like domains. Interacts with Human herpesvirus 8 vOX2 protein. In terms of assembly, (Microbial infection) Interacts with human herpesvirus 8/HHV-8 protein vOX2/K14. In terms of tissue distribution, expressed in granulocytes, monocytes, most T-cells, neutrophils, basophils and a subset of NK, NKT and B-cells (at protein level). Expressed in bone marrow, lymph nodes, spleen, lung, liver, spinal cord, kidney. Expressed in monocyte-derived dendritic and mast cells.

Its subcellular location is the cell membrane. The protein localises to the secreted. Its function is as follows. Inhibitory receptor for the CD200/OX2 cell surface glycoprotein. Limits inflammation by inhibiting the expression of pro-inflammatory molecules including TNF-alpha, interferons, and inducible nitric oxide synthase (iNOS) in response to selected stimuli. Also binds to HHV-8 K14 viral CD200 homolog with identical affinity and kinetics as the host CD200. The sequence is that of Cell surface glycoprotein CD200 receptor 1 (CD200R1) from Homo sapiens (Human).